A 503-amino-acid chain; its full sequence is Structure-specific endonuclease subunit EME2 (503 aa).

3 stretches are compositionally biased toward basic and acidic residues: residues 1–10 (METKQERETG), 38–48 (ETNKPQTESRK), and 112–135 (AEEK…LEKI). The disordered stretch occupies residues 1–135 (METKQERETG…KAQKKELEKI (135 aa)). The segment at 70-366 (QPDVEEKTKN…RPFRKHWEAQ (297 aa)) is nuclease-like domain; forms the post-nick DNA binding interface and is involved in DNA recognition and bending. Positions 103–151 (EQVAAEQEQAEEKKRQRELKRQEKAQKKELEKIERERRKETNLALKLLR) form a coiled coil. The helix-hairpin-helix (2HhH); forms the pre-nick DNA binding interface and is involved in DNA recognition and bending stretch occupies residues 388–503 (GLPLTWRRQI…NPELVLDLNS (116 aa)).

The protein belongs to the EME1/MMS4 family. As to quaternary structure, part of the heterodimeric MUS81-EME2 complex; the complex forms specifically during the DNA replication phase of the cell cycle.

It is found in the nucleus. Its function is as follows. Non-catalytic subunit of the structure-specific, heterodimeric DNA endonuclease MUS81-EME2 which is involved in the maintenance of genome stability. In the complex, EME2 is required for DNA cleavage, participating in DNA recognition and bending. MUS81-EME2 cleaves 3'-flaps and nicked Holliday junctions, and exhibit limited endonuclease activity with 5' flaps and nicked double-stranded DNAs. MUS81-EME2 which is active during the replication of DNA is more specifically involved in replication fork processing. Replication forks frequently encounter obstacles to their passage, including DNA base lesions, DNA interstrand cross-links, difficult-to-replicate sequences, transcription bubbles, or tightly bound proteins. One mechanism for the restart of a stalled replication fork involves nucleolytic cleavage mediated by the MUS81-EME2 endonuclease. By acting upon the stalled fork, MUS81-EME2 generates a DNA double-strand break (DSB) that can be repaired by homologous recombination, leading to the restoration of an active fork. MUS81-EME2 could also function in telomere maintenance. This is Structure-specific endonuclease subunit EME2 (eme2) from Xenopus tropicalis (Western clawed frog).